Here is a 282-residue protein sequence, read N- to C-terminus: E3 ubiquitin-protein ligase SIAH1 (282 aa).

Residues 1–17 (MSRQTATALPTGTSKCP) are compositionally biased toward polar residues. The interval 1-22 (MSRQTATALPTGTSKCPPSQRV) is disordered. S19 bears the Phosphoserine; by ATM and ATR mark. An RING-type zinc finger spans residues 41–76 (CPVCFDYVLPPILQCQSGHLVCSNCRPKLTCCPTCR). Residues 90 to 282 (VANSVLFPCK…LGINVTISMC (193 aa)) form an SBD region. An SIAH-type zinc finger spans residues 93–153 (SVLFPCKYAS…VMPHLMHQHK (61 aa)). Zn(2+)-binding residues include C98, C105, H117, C121, C128, C135, H147, and H152.

The protein belongs to the SINA (Seven in absentia) family. As to quaternary structure, homodimer. Interacts with group 1 glutamate receptors GRM1 and GRM5. Interacts with DAB1, which may inhibit its activity. Interacts with UBE2E2. Interacts with PEG3. Interacts with GAPDH; leading to stabilize SIAH1. Component of some large E3 complex composed of UBE2D1, SIAH1, CACYBP/SIP, SKP1, APC and TBL1X. Interacts with UBE2I. Interacts with alpha-tubulin. Interacts with PEG10, which may inhibit its activity. Interacts with KHDRBS3. Interacts with SNCAIP. Interacts with HIPK2; the interaction is promoted by DAZAP2 and results in SIAH1-mediated ubiquitination and subsequent proteasomal degradation of HIPK2. Interacts with DAZAP2; the interaction is decreased following phosphorylation of DAZAP2 by HIPK2. Interacts with Bassoon/BSN and Piccolo/PLCO; these interactions negatively regulate SIAH1 E3 ligase activity. Interacts with DCC. Interacts with AXIN1; catalyzes AXIN1 ubiquitination and subsequent proteasome-mediated ubiquitin-dependent degradation. Post-translationally, phosphorylated on Ser-19 by ATM and ATR. This phosphorylation disrupts SIAH1 interaction with HIPK2, and subsequent proteasomal degradation of HIPK2. As to expression, widely expressed at a low level. Down-regulated in advanced hepatocellular carcinomas.

The protein localises to the cytoplasm. It is found in the nucleus. It carries out the reaction S-ubiquitinyl-[E2 ubiquitin-conjugating enzyme]-L-cysteine + [acceptor protein]-L-lysine = [E2 ubiquitin-conjugating enzyme]-L-cysteine + N(6)-ubiquitinyl-[acceptor protein]-L-lysine.. It participates in protein modification; protein ubiquitination. Its activity is regulated as follows. Inhibited by interaction with SNCAIP (isoform 2, but not isoform 1). May be inhibited by interaction with PEG10. E3 ubiquitin-protein ligase that mediates ubiquitination and subsequent proteasomal degradation of target proteins. E3 ubiquitin ligases accept ubiquitin from an E2 ubiquitin-conjugating enzyme in the form of a thioester and then directly transfers the ubiquitin to targeted substrates. Mediates E3 ubiquitin ligase activity either through direct binding to substrates or by functioning as the essential RING domain subunit of larger E3 complexes. Triggers the ubiquitin-mediated degradation of many substrates, including proteins involved in transcription regulation (ELL2, MYB, POU2AF1, PML and RBBP8), a cell surface receptor (DCC), the cell-surface receptor-type tyrosine kinase FLT3, the cytoplasmic signal transduction molecules (KLF10/TIEG1 and NUMB), an antiapoptotic protein (BAG1), a microtubule motor protein (KIF22), a protein involved in synaptic vesicle function in neurons (SYP), a structural protein (CTNNB1) and SNCAIP. Confers constitutive instability to HIPK2 through proteasomal degradation. It is thereby involved in many cellular processes such as apoptosis, tumor suppression, cell cycle, axon guidance, transcription regulation, spermatogenesis and TNF-alpha signaling. Has some overlapping function with SIAH2. Induces apoptosis in cooperation with PEG3. Upon nitric oxid (NO) generation that follows apoptotic stimulation, interacts with S-nitrosylated GAPDH, mediating the translocation of GAPDH to the nucleus. GAPDH acts as a stabilizer of SIAH1, facilitating the degradation of nuclear proteins. Mediates ubiquitination and degradation of EGLN2 and EGLN3 in response to the unfolded protein response (UPR), leading to their degradation and subsequent stabilization of ATF4. Also part of the Wnt signaling pathway in which it mediates the Wnt-induced ubiquitin-mediated proteasomal degradation of AXIN1. The protein is E3 ubiquitin-protein ligase SIAH1 (SIAH1) of Homo sapiens (Human).